The following is a 414-amino-acid chain: Tyrosine--tRNA ligase (414 aa).

Position 38 (Tyr-38) interacts with L-tyrosine. The 'HIGH' region motif lies at 43 to 52; that stretch reads CTARSLHIGS. L-tyrosine contacts are provided by Tyr-172 and Gln-176. The 'KMSKS' region motif lies at 232 to 236; sequence KMGKT. Lys-235 serves as a coordination point for ATP. One can recognise an S4 RNA-binding domain in the interval 345-412; that stretch reads ISVAKLLQLA…GKKRRIKVVV (68 aa).

This sequence belongs to the class-I aminoacyl-tRNA synthetase family. TyrS type 1 subfamily. In terms of assembly, homodimer.

It localises to the cytoplasm. The enzyme catalyses tRNA(Tyr) + L-tyrosine + ATP = L-tyrosyl-tRNA(Tyr) + AMP + diphosphate + H(+). In terms of biological role, catalyzes the attachment of tyrosine to tRNA(Tyr) in a two-step reaction: tyrosine is first activated by ATP to form Tyr-AMP and then transferred to the acceptor end of tRNA(Tyr). The sequence is that of Tyrosine--tRNA ligase from Anaplasma marginale (strain St. Maries).